Here is a 103-residue protein sequence, read N- to C-terminus: MGGEDMAKKKAPSAKEGEKQQGFKEIIPEVTEKLVEQARKEVARERWVTPHKLAQKMGVKVSIARRVLRILEEEGVLVLFTRNRRSPLYLPKKKVPTAPPRGL.

The tract at residues 1-23 (MGGEDMAKKKAPSAKEGEKQQGF) is disordered.

Belongs to the eukaryotic ribosomal protein eS25 family.

The polypeptide is Small ribosomal subunit protein eS25 (rps25e) (Aeropyrum pernix (strain ATCC 700893 / DSM 11879 / JCM 9820 / NBRC 100138 / K1)).